The primary structure comprises 1486 residues: Chromosome partition protein MukB (1486 aa).

An ATP-binding site is contributed by 34–41 (GGNGAGKS). Coiled-coil stretches lie at residues 326–418 (LEAD…QYNQ), 444–480 (LETF…QAYQ), and 509–603 (RHLA…RAPV). The interval 666–783 (PGGSEDQRLN…EVPLFGRAAR (118 aa)) is flexible hinge. 3 coiled-coil regions span residues 835 to 923 (EAEI…AKLE), 977 to 1115 (EMLS…TAKA), and 1209 to 1265 (VEAI…LQSV).

This sequence belongs to the SMC family. MukB subfamily. In terms of assembly, homodimerization via its hinge domain. Binds to DNA via its C-terminal region. Interacts, and probably forms a ternary complex, with MukE and MukF via its C-terminal region. The complex formation is stimulated by calcium or magnesium. Interacts with tubulin-related protein FtsZ.

The protein resides in the cytoplasm. The protein localises to the nucleoid. Functionally, plays a central role in chromosome condensation, segregation and cell cycle progression. Functions as a homodimer, which is essential for chromosome partition. Involved in negative DNA supercoiling in vivo, and by this means organize and compact chromosomes. May achieve or facilitate chromosome segregation by condensation DNA from both sides of a centrally located replisome during cell division. This chain is Chromosome partition protein MukB, found in Escherichia coli O7:K1 (strain IAI39 / ExPEC).